The following is a 320-amino-acid chain: Cytochrome f (320 aa).

A signal peptide spans 1–35 (MQMRNTFSWIKEEIIRFIAVSLIIYIITRAPISNA). Positions 36, 56, 59, and 60 each coordinate heme. Residues 286-306 (VQGLLLFLASIILAQIFLVLK) traverse the membrane as a helical segment.

This sequence belongs to the cytochrome f family. As to quaternary structure, the 4 large subunits of the cytochrome b6-f complex are cytochrome b6, subunit IV (17 kDa polypeptide, petD), cytochrome f and the Rieske protein, while the 4 small subunits are PetG, PetL, PetM and PetN. The complex functions as a dimer. Heme is required as a cofactor.

It localises to the plastid. The protein resides in the chloroplast thylakoid membrane. Component of the cytochrome b6-f complex, which mediates electron transfer between photosystem II (PSII) and photosystem I (PSI), cyclic electron flow around PSI, and state transitions. The sequence is that of Cytochrome f from Morus indica (Mulberry).